The chain runs to 280 residues: Diaminopimelate epimerase (280 aa).

Substrate is bound by residues N15 and N66. C75 acts as the Proton donor in catalysis. Substrate-binding positions include 76–77 (GN), N163, N196, and 214–215 (ER). Catalysis depends on C223, which acts as the Proton acceptor. 224–225 (GT) is a binding site for substrate.

It belongs to the diaminopimelate epimerase family. Homodimer.

The protein localises to the cytoplasm. The catalysed reaction is (2S,6S)-2,6-diaminopimelate = meso-2,6-diaminopimelate. It participates in amino-acid biosynthesis; L-lysine biosynthesis via DAP pathway; DL-2,6-diaminopimelate from LL-2,6-diaminopimelate: step 1/1. Its function is as follows. Catalyzes the stereoinversion of LL-2,6-diaminopimelate (L,L-DAP) to meso-diaminopimelate (meso-DAP), a precursor of L-lysine and an essential component of the bacterial peptidoglycan. This is Diaminopimelate epimerase from Phocaeicola vulgatus (strain ATCC 8482 / DSM 1447 / JCM 5826 / CCUG 4940 / NBRC 14291 / NCTC 11154) (Bacteroides vulgatus).